Here is a 167-residue protein sequence, read N- to C-terminus: Endoribonuclease YbeY (167 aa).

Positions 131, 135, and 141 each coordinate Zn(2+).

The protein belongs to the endoribonuclease YbeY family. Requires Zn(2+) as cofactor.

It is found in the cytoplasm. In terms of biological role, single strand-specific metallo-endoribonuclease involved in late-stage 70S ribosome quality control and in maturation of the 3' terminus of the 16S rRNA. In Rickettsia felis (strain ATCC VR-1525 / URRWXCal2) (Rickettsia azadi), this protein is Endoribonuclease YbeY.